A 200-amino-acid polypeptide reads, in one-letter code: Phospholipase A2 inhibitor 1 (200 aa).

The signal sequence occupies residues 1–19; sequence MKSLHIICLLFIFVARGNS. Cystine bridges form between cysteine 22-cysteine 46, cysteine 25-cysteine 32, cysteine 39-cysteine 67, cysteine 73-cysteine 94, cysteine 95-cysteine 100, cysteine 118-cysteine 143, cysteine 136-cysteine 165, and cysteine 169-cysteine 191. N-linked (GlcNAc...) asparagine glycosylation is present at asparagine 176.

This sequence belongs to the CNF-like-inhibitor family. In terms of assembly, occurs as a mixture of oligomers. Tetrameric arrangement appears to be the predominant quaternary structure. In terms of processing, N-glycosylated. Expressed by the liver.

The protein resides in the secreted. Inhibits basic phospholipase A2 isozymes PLA-B, BP-I and BP-II. The chain is Phospholipase A2 inhibitor 1 from Protobothrops flavoviridis (Habu).